Consider the following 493-residue polypeptide: Phospholipid transfer protein (493 aa).

Positions 1-17 are cleaved as a signal peptide; that stretch reads MVLLWALFLALLAGAHA. Asn64, Asn91, Asn94, Asn117, and Asn143 each carry an N-linked (GlcNAc...) asparagine glycan. An intrachain disulfide couples Cys146 to Cys185. Asn245 and Asn398 each carry an N-linked (GlcNAc...) asparagine glycan.

It belongs to the BPI/LBP/Plunc superfamily. BPI/LBP family. In terms of processing, glycosylation is necessary for secretion and its phospholipid transfer activity. In terms of tissue distribution, highest level expression in the lung, brain and heart with relatively low levels in the liver, skeletal muscle and testis and very low levels found in the spleen and kidney.

It is found in the secreted. Its subcellular location is the nucleus. The enzyme catalyses a 1,2-diacyl-sn-glycero-3-phosphocholine(in) = a 1,2-diacyl-sn-glycero-3-phosphocholine(out). The catalysed reaction is a 1,2-diacyl-sn-glycero-3-phosphoethanolamine(in) = a 1,2-diacyl-sn-glycero-3-phosphoethanolamine(out). It carries out the reaction a 1,2-diacyl-sn-glycerol(in) = a 1,2-diacyl-sn-glycerol(out). It catalyses the reaction a 1,2-diacyl-sn-glycero-3-phosphate(in) = a 1,2-diacyl-sn-glycero-3-phosphate(out). The enzyme catalyses a sphingomyelin(in) = a sphingomyelin(out). The catalysed reaction is a 1,2-diacyl-sn-glycero-3-phospho-(1'-sn-glycerol)(in) = a 1,2-diacyl-sn-glycero-3-phospho-(1'-sn-glycerol)(out). It carries out the reaction a 1,2-diacyl-sn-glycero-3-phospho-(1D-myo-inositol)(in) = a 1,2-diacyl-sn-glycero-3-phospho-(1D-myo-inositol)(out). It catalyses the reaction 1-hexadecanoyl-2-(5Z,8Z,11Z,14Z-eicosatetraenoyl)-sn-glycero-3-phosphoethanolamine(in) = 1-hexadecanoyl-2-(5Z,8Z,11Z,14Z-eicosatetraenoyl)-sn-glycero-3-phosphoethanolamine(out). The enzyme catalyses N-(hexadecanoyl)-sphing-4-enine-1-phosphocholine(in) = N-(hexadecanoyl)-sphing-4-enine-1-phosphocholine(out). The catalysed reaction is 1,2-dihexadecanoyl-sn-glycero-3-phosphocholine(in) = 1,2-dihexadecanoyl-sn-glycero-3-phosphocholine(out). Mediates the transfer of phospholipids and free cholesterol from triglyceride-rich lipoproteins (low density lipoproteins or LDL and very low density lipoproteins or VLDL) into high-density lipoproteins (HDL) as well as the exchange of phospholipids between triglyceride-rich lipoproteins themselves. Facilitates the transfer of a spectrum of different lipid molecules, including sphingomyelin, phosphatidylcholine, phosphatidylinositol, phosphatidylglycerol, and phosphatidyl ethanolamine. Plays an important role in HDL remodeling which involves modulating the size and composition of HDL. Also plays a key role in the uptake of cholesterol from peripheral cells and tissues that is subsequently transported to the liver for degradation and excretion. Two distinct forms of PLTP exist in plasma: an active form that can transfer phosphatidylcholine from phospholipid vesicles to HDL, and an inactive form that lacks this capability. In Mus musculus (Mouse), this protein is Phospholipid transfer protein (Pltp).